Consider the following 158-residue polypeptide: NAD(P)H-quinone oxidoreductase subunit N (158 aa).

The protein belongs to the complex I NdhN subunit family. NDH-1 can be composed of about 15 different subunits; different subcomplexes with different compositions have been identified which probably have different functions.

The protein localises to the cellular thylakoid membrane. It catalyses the reaction a plastoquinone + NADH + (n+1) H(+)(in) = a plastoquinol + NAD(+) + n H(+)(out). It carries out the reaction a plastoquinone + NADPH + (n+1) H(+)(in) = a plastoquinol + NADP(+) + n H(+)(out). NDH-1 shuttles electrons from an unknown electron donor, via FMN and iron-sulfur (Fe-S) centers, to quinones in the respiratory and/or the photosynthetic chain. The immediate electron acceptor for the enzyme in this species is believed to be plastoquinone. Couples the redox reaction to proton translocation, and thus conserves the redox energy in a proton gradient. Cyanobacterial NDH-1 also plays a role in inorganic carbon-concentration. This Microcystis aeruginosa (strain NIES-843 / IAM M-2473) protein is NAD(P)H-quinone oxidoreductase subunit N.